A 280-amino-acid chain; its full sequence is MATSLLLRHSSAVFFSQSSFFTKNKSFRSFTSIKMEKGEAENAVKTKKVFVAGATGQTGKRIVEQLLSRGFAVKAGVRDVEKAKTSFKDDPSLQIVRADVTEGPDKLAEVIGDDSQAVICATGFRPGFDIFTPWKVDNFGTVNLVDACRKQGVEKFVLVSSILVNGAAMGQILNPAYLFLNLFGLTLVAKLQAEKYIKKSGINYTIVRPGGLKNDPPTGNVVMEPEDTLYEGSISRDLVAEVAVEALLQEESSFKVVEIVARAEAPKRSYKDLFASVKGQ.

The N-terminal 51 residues, M1–V51, are a transit peptide targeting the chloroplast.

The protein belongs to the NAD(P)-dependent epimerase/dehydratase family.

The protein resides in the plastid. Its subcellular location is the chloroplast. It localises to the plastoglobule. This is an uncharacterized protein from Arabidopsis thaliana (Mouse-ear cress).